The chain runs to 379 residues: Chaperone protein DnaJ (379 aa).

Residues 5–70 (DYYEILEVSR…EKRAAYDRYG (66 aa)) enclose the J domain. The CR-type zinc finger occupies 135–213 (GIKVPISYVT…CGGSGRVRNE (79 aa)). The Zn(2+) site is built by C148, C151, C165, C168, C187, C190, C201, and C204. 4 CXXCXGXG motif repeats span residues 148–155 (CSSCSGIG), 165–172 (CGNCNGAG), 187–194 (CNVCNGEG), and 201–208 (CRRCGGSG).

Belongs to the DnaJ family. As to quaternary structure, homodimer. Requires Zn(2+) as cofactor.

Its subcellular location is the cytoplasm. Participates actively in the response to hyperosmotic and heat shock by preventing the aggregation of stress-denatured proteins and by disaggregating proteins, also in an autonomous, DnaK-independent fashion. Unfolded proteins bind initially to DnaJ; upon interaction with the DnaJ-bound protein, DnaK hydrolyzes its bound ATP, resulting in the formation of a stable complex. GrpE releases ADP from DnaK; ATP binding to DnaK triggers the release of the substrate protein, thus completing the reaction cycle. Several rounds of ATP-dependent interactions between DnaJ, DnaK and GrpE are required for fully efficient folding. Also involved, together with DnaK and GrpE, in the DNA replication of plasmids through activation of initiation proteins. This is Chaperone protein DnaJ from Anaplasma marginale (strain Florida).